The following is a 300-amino-acid chain: tRNA U34 carboxymethyltransferase (300 aa).

Carboxy-S-adenosyl-L-methionine-binding positions include K73, W87, K92, G111, 133–135 (DPS), 160–161 (VE), Y180, and R293.

It belongs to the class I-like SAM-binding methyltransferase superfamily. CmoB family. As to quaternary structure, homotetramer.

The enzyme catalyses carboxy-S-adenosyl-L-methionine + 5-hydroxyuridine(34) in tRNA = 5-carboxymethoxyuridine(34) in tRNA + S-adenosyl-L-homocysteine + H(+). Functionally, catalyzes carboxymethyl transfer from carboxy-S-adenosyl-L-methionine (Cx-SAM) to 5-hydroxyuridine (ho5U) to form 5-carboxymethoxyuridine (cmo5U) at position 34 in tRNAs. This is tRNA U34 carboxymethyltransferase from Nautilia profundicola (strain ATCC BAA-1463 / DSM 18972 / AmH).